Here is a 254-residue protein sequence, read N- to C-terminus: Alcohol dehydrogenase (254 aa).

Met1 carries the N-acetylmethionine modification. Residue 10-33 coordinates NAD(+); sequence FVAALGGIGLDTSRELVKRNLKNF. Ser138 provides a ligand contact to substrate. The active-site Proton acceptor is the Tyr151.

The protein belongs to the short-chain dehydrogenases/reductases (SDR) family. As to quaternary structure, homodimer.

The catalysed reaction is a primary alcohol + NAD(+) = an aldehyde + NADH + H(+). The enzyme catalyses a secondary alcohol + NAD(+) = a ketone + NADH + H(+). This chain is Alcohol dehydrogenase (Adh), found in Drosophila lebanonensis (Fruit fly).